A 441-amino-acid polypeptide reads, in one-letter code: tRNA (guanine(37)-N(1))-methyltransferase (441 aa).

The transit peptide at 1–9 directs the protein to the mitochondrion; the sequence is MFAPPAARA. S-adenosyl-L-methionine contacts are provided by residues arginine 221, 248–249, 276–277, and asparagine 331; these read DL and DG.

This sequence belongs to the class I-like SAM-binding methyltransferase superfamily. TRM5/TYW2 family. As to quaternary structure, monomer.

It localises to the mitochondrion matrix. Its subcellular location is the nucleus. The protein resides in the cytoplasm. The enzyme catalyses guanosine(37) in tRNA + S-adenosyl-L-methionine = N(1)-methylguanosine(37) in tRNA + S-adenosyl-L-homocysteine + H(+). Functionally, specifically methylates the N1 position of guanosine-37 in various cytoplasmic and mitochondrial tRNAs. Methylation is not dependent on the nature of the nucleoside 5' of the target nucleoside. This is the first step in the biosynthesis of wybutosine (yW), a modified base adjacent to the anticodon of tRNAs and required for accurate decoding. The polypeptide is tRNA (guanine(37)-N(1))-methyltransferase (Phaeosphaeria nodorum (strain SN15 / ATCC MYA-4574 / FGSC 10173) (Glume blotch fungus)).